The sequence spans 786 residues: Probable aminopeptidase 1 (786 aa).

Substrate-binding positions include Glu103 and 235 to 239 (GAMEN). A Zn(2+)-binding site is contributed by His270. Catalysis depends on Glu271, which acts as the Proton acceptor. The Zn(2+) site is built by His274 and Glu293.

It belongs to the peptidase M1 family. Zn(2+) serves as cofactor.

The protein resides in the cytoplasm. The polypeptide is Probable aminopeptidase 1 (ape1) (Sulfurisphaera tokodaii (strain DSM 16993 / JCM 10545 / NBRC 100140 / 7) (Sulfolobus tokodaii)).